A 179-amino-acid chain; its full sequence is Large ribosomal subunit protein uL5 (179 aa).

Belongs to the universal ribosomal protein uL5 family. In terms of assembly, part of the 50S ribosomal subunit; part of the 5S rRNA/L5/L18/L25 subcomplex. Contacts the 5S rRNA and the P site tRNA. Forms a bridge to the 30S subunit in the 70S ribosome.

Its function is as follows. This is one of the proteins that bind and probably mediate the attachment of the 5S RNA into the large ribosomal subunit, where it forms part of the central protuberance. In the 70S ribosome it contacts protein S13 of the 30S subunit (bridge B1b), connecting the 2 subunits; this bridge is implicated in subunit movement. Contacts the P site tRNA; the 5S rRNA and some of its associated proteins might help stabilize positioning of ribosome-bound tRNAs. This Rickettsia bellii (strain OSU 85-389) protein is Large ribosomal subunit protein uL5.